The sequence spans 175 residues: ATP-dependent protease subunit HslV (175 aa).

Thr2 is a catalytic residue. Gly158, Cys161, and Thr164 together coordinate Na(+).

Belongs to the peptidase T1B family. HslV subfamily. As to quaternary structure, a double ring-shaped homohexamer of HslV is capped on each side by a ring-shaped HslU homohexamer. The assembly of the HslU/HslV complex is dependent on binding of ATP.

The protein localises to the cytoplasm. It catalyses the reaction ATP-dependent cleavage of peptide bonds with broad specificity.. Its activity is regulated as follows. Allosterically activated by HslU binding. In terms of biological role, protease subunit of a proteasome-like degradation complex believed to be a general protein degrading machinery. This is ATP-dependent protease subunit HslV from Haemophilus influenzae (strain PittEE).